A 321-amino-acid chain; its full sequence is Glutaminase (321 aa).

Residues Ser-69, Asn-120, Glu-165, Asn-172, Tyr-196, Tyr-248, and Val-266 each contribute to the substrate site.

This sequence belongs to the glutaminase family. In terms of assembly, homotetramer.

It catalyses the reaction L-glutamine + H2O = L-glutamate + NH4(+). This Parabacteroides distasonis (strain ATCC 8503 / DSM 20701 / CIP 104284 / JCM 5825 / NCTC 11152) protein is Glutaminase.